A 242-amino-acid chain; its full sequence is tRNA pseudouridine synthase A (242 aa).

Aspartate 51 functions as the Nucleophile in the catalytic mechanism. Tyrosine 107 contacts substrate.

The protein belongs to the tRNA pseudouridine synthase TruA family. Homodimer.

The enzyme catalyses uridine(38/39/40) in tRNA = pseudouridine(38/39/40) in tRNA. Its function is as follows. Formation of pseudouridine at positions 38, 39 and 40 in the anticodon stem and loop of transfer RNAs. The sequence is that of tRNA pseudouridine synthase A from Helicobacter pylori (strain P12).